Consider the following 282-residue polypeptide: Acetyl-coenzyme A carboxylase carboxyl transferase subunit beta (282 aa).

The CoA carboxyltransferase N-terminal domain maps to 26–282 (GLWHQTPTGK…VSKTVKLLVH (257 aa)).

The protein belongs to the AccD/PCCB family. Acetyl-CoA carboxylase is a heterohexamer composed of biotin carboxyl carrier protein (AccB), biotin carboxylase (AccC) and two subunits each of ACCase subunit alpha (AccA) and ACCase subunit beta (AccD).

It localises to the cytoplasm. It carries out the reaction N(6)-carboxybiotinyl-L-lysyl-[protein] + acetyl-CoA = N(6)-biotinyl-L-lysyl-[protein] + malonyl-CoA. The protein operates within lipid metabolism; malonyl-CoA biosynthesis; malonyl-CoA from acetyl-CoA: step 1/1. Functionally, component of the acetyl coenzyme A carboxylase (ACC) complex. Biotin carboxylase (BC) catalyzes the carboxylation of biotin on its carrier protein (BCCP) and then the CO(2) group is transferred by the transcarboxylase to acetyl-CoA to form malonyl-CoA. The chain is Acetyl-coenzyme A carboxylase carboxyl transferase subunit beta from Flavobacteriaceae bacterium (strain 3519-10).